Consider the following 279-residue polypeptide: NADPH-dependent 7-cyano-7-deazaguanine reductase (279 aa).

86–88 is a binding site for substrate; the sequence is IES. 88–89 is an NADPH binding site; the sequence is SK. Cys-186 serves as the catalytic Thioimide intermediate. The Proton donor role is filled by Asp-193. Position 225-226 (225-226) interacts with substrate; it reads HE. NADPH is bound at residue 254-255; sequence RG.

Belongs to the GTP cyclohydrolase I family. QueF type 2 subfamily. Homodimer.

The protein localises to the cytoplasm. The enzyme catalyses 7-aminomethyl-7-carbaguanine + 2 NADP(+) = 7-cyano-7-deazaguanine + 2 NADPH + 3 H(+). It participates in tRNA modification; tRNA-queuosine biosynthesis. Catalyzes the NADPH-dependent reduction of 7-cyano-7-deazaguanine (preQ0) to 7-aminomethyl-7-deazaguanine (preQ1). This chain is NADPH-dependent 7-cyano-7-deazaguanine reductase, found in Chromobacterium violaceum (strain ATCC 12472 / DSM 30191 / JCM 1249 / CCUG 213 / NBRC 12614 / NCIMB 9131 / NCTC 9757 / MK).